An 884-amino-acid polypeptide reads, in one-letter code: Alanine--tRNA ligase (884 aa).

Residues His-562, His-566, Cys-674, and His-678 each coordinate Zn(2+).

It belongs to the class-II aminoacyl-tRNA synthetase family. Zn(2+) is required as a cofactor.

The protein localises to the cytoplasm. The enzyme catalyses tRNA(Ala) + L-alanine + ATP = L-alanyl-tRNA(Ala) + AMP + diphosphate. Catalyzes the attachment of alanine to tRNA(Ala) in a two-step reaction: alanine is first activated by ATP to form Ala-AMP and then transferred to the acceptor end of tRNA(Ala). Also edits incorrectly charged Ser-tRNA(Ala) and Gly-tRNA(Ala) via its editing domain. The polypeptide is Alanine--tRNA ligase (Rhizobium etli (strain ATCC 51251 / DSM 11541 / JCM 21823 / NBRC 15573 / CFN 42)).